The primary structure comprises 766 residues: Deoxynucleotidyltransferase terminal-interacting protein 2 (766 aa).

The disordered stretch occupies residues 1-99 (MVVTRSARPQ…DCSSVPEVQD (99 aa)). Composition is skewed to polar residues over residues 13-28 (NEATSVESLRQKNSAV) and 42-56 (SPDNPNTTESQTTPE). A Phosphothreonine modification is found at Thr-127. Phosphoserine occurs at positions 139, 143, and 146. The segment at 155–175 (TEITTRRSKAKSQREPKQESH) is disordered. Residues 166-175 (SQREPKQESH) are compositionally biased toward basic and acidic residues. A phosphoserine mark is found at Ser-180 and Ser-190. A Glycyl lysine isopeptide (Lys-Gly) (interchain with G-Cter in SUMO2) cross-link involves residue Lys-217. Thr-229 is modified (phosphothreonine). Phosphoserine is present on residues Ser-236, Ser-248, and Ser-250. Residue Lys-254 forms a Glycyl lysine isopeptide (Lys-Gly) (interchain with G-Cter in SUMO2) linkage. Ser-258 is modified (phosphoserine). Residue Lys-327 forms a Glycyl lysine isopeptide (Lys-Gly) (interchain with G-Cter in SUMO2) linkage. Ser-334 carries the post-translational modification Phosphoserine. Disordered regions lie at residues 345–367 (VSQRHSTPESDKTTSESSTLNHE), 390–450 (KNAI…KDDS), and 520–557 (KAGEVATEEEEEEEEEESEEELSDHDRNKDNEFSDEDN). Lys-394 is covalently cross-linked (Glycyl lysine isopeptide (Lys-Gly) (interchain with G-Cter in SUMO2)). Basic and acidic residues predominate over residues 421–434 (DMSKEKEVDSESDT). The segment covering 435-444 (KPSNLEFNTT) has biased composition (polar residues). Residues 515 to 552 (LDEEDKAGEVATEEEEEEEEEESEEELSDHDRNKDNEF) adopt a coiled-coil conformation. Residues 520-542 (KAGEVATEEEEEEEEEESEEELS) are compositionally biased toward acidic residues. The interval 558–615 (LLSNTKSKLLKLMSSSIDTGLNIKELGGLYINFNADKVQLNKRTLTQMKEKRKDELLQ) is tdBR region; mediates interaction with DNTT. Residues Lys-568, Lys-594, and Lys-616 each participate in a glycyl lysine isopeptide (Lys-Gly) (interchain with G-Cter in SUMO2) cross-link. At Thr-620 the chain carries Phosphothreonine. Residues Lys-636, Lys-659, Lys-668, Lys-696, and Lys-741 each participate in a glycyl lysine isopeptide (Lys-Gly) (interchain with G-Cter in SUMO2) cross-link.

As to quaternary structure, forms a ternary complex with DNTT and core histone; interaction with PCNA releases DNTT and H2A/H2B histones from this ternary complex. Interacts with ESR1, ESR2, PPARG and RXRA. Part of the small subunit (SSU) processome, composed of more than 70 proteins and the RNA chaperone small nucleolar RNA (snoRNA) U3.

It localises to the nucleus. The protein localises to the nucleolus. Regulates the transcriptional activity of DNTT and ESR1. May function as a chromatin remodeling protein. Part of the small subunit (SSU) processome, first precursor of the small eukaryotic ribosomal subunit. During the assembly of the SSU processome in the nucleolus, many ribosome biogenesis factors, an RNA chaperone and ribosomal proteins associate with the nascent pre-rRNA and work in concert to generate RNA folding, modifications, rearrangements and cleavage as well as targeted degradation of pre-ribosomal RNA by the RNA exosome. The chain is Deoxynucleotidyltransferase terminal-interacting protein 2 (DNTTIP2) from Bos taurus (Bovine).